Reading from the N-terminus, the 314-residue chain is Elongator complex protein 5 (314 aa).

It belongs to the ELP5 family. In terms of assembly, component of the elongator complex.

The protein resides in the cytoplasm. It localises to the nucleus. It participates in tRNA modification; 5-methoxycarbonylmethyl-2-thiouridine-tRNA biosynthesis. Component of the elongator complex, a multiprotein complex which is required for multiple tRNA modifications, including mcm5U (5-methoxycarbonylmethyl uridine), mcm5s2U (5-methoxycarbonylmethyl-2-thiouridine), and ncm5U (5-carbamoylmethyl uridine). The elongator complex catalyzes formation of carboxymethyluridine in the wobble base at position 34 in tRNAs. The polypeptide is Elongator complex protein 5 (iki1) (Schizosaccharomyces pombe (strain 972 / ATCC 24843) (Fission yeast)).